A 131-amino-acid polypeptide reads, in one-letter code: uncharacterized protein (131 aa).

The span at 31–40 (AAATSRAAPL) shows a compositional bias: low complexity. The tract at residues 31-131 (AAATSRAAPL…EAKTEQTKTP (101 aa)) is disordered.

This is an uncharacterized protein from Homo sapiens (Human).